Consider the following 281-residue polypeptide: Hydroxyethylthiazole kinase (281 aa).

The ATP site is built by arginine 124 and serine 169.

It belongs to the Thz kinase family. Requires Mg(2+) as cofactor.

The enzyme catalyses 5-(2-hydroxyethyl)-4-methylthiazole + ATP = 4-methyl-5-(2-phosphooxyethyl)-thiazole + ADP + H(+). It functions in the pathway cofactor biosynthesis; thiamine diphosphate biosynthesis; 4-methyl-5-(2-phosphoethyl)-thiazole from 5-(2-hydroxyethyl)-4-methylthiazole: step 1/1. Catalyzes the phosphorylation of the hydroxyl group of 4-methyl-5-beta-hydroxyethylthiazole (THZ). This Rhodococcus erythropolis (strain PR4 / NBRC 100887) protein is Hydroxyethylthiazole kinase.